A 297-amino-acid polypeptide reads, in one-letter code: MSKKPTTKKEVQTTGHSWDGIEELNTPLPRWWLWTFYATIVWGVAYSIAMPAWPIFASGATPGILGSSTRADVEKDIAKFAEMNKAVEDKLVATDLTAIAADPELVTYTRNAGAAVFRTWCAQCHGAGAGGNTGFPSLLDGDWLHGGSIETIYTNIKHGIRDPLDPDTLPVANMPAHLTDELLEPAQIDDVVQYVLKISGQPADEARATAGQQVFADNCVSCHGEDAKGMVEMGAPNLTDGIWLYGGDANTITTTIQLGRGGVMPSWSWAADGAKPRLSEAQIRAVASYVHSLGGGQ.

The Cytoplasmic segment spans residues 1 to 35 (MSKKPTTKKEVQTTGHSWDGIEELNTPLPRWWLWT). The helical transmembrane segment at 36–56 (FYATIVWGVAYSIAMPAWPIF) threads the bilayer. Residues 57-297 (ASGATPGILG…SYVHSLGGGQ (241 aa)) are Periplasmic-facing. Cytochrome c domains lie at 108-199 (YTRN…LKIS) and 206-294 (ARAT…HSLG). The heme c site is built by cysteine 121, cysteine 124, histidine 125, methionine 174, cysteine 219, cysteine 222, histidine 223, and methionine 264.

This sequence belongs to the CcoP / FixP family. Component of the cbb3-type cytochrome c oxidase at least composed of CcoN, CcoO, CcoQ and CcoP. Interacts with CcoH (via transmembrane domain). It depends on heme c as a cofactor.

It is found in the cell inner membrane. Its pathway is energy metabolism; oxidative phosphorylation. Its function is as follows. C-type cytochrome. Part of the cbb3-type cytochrome c oxidase complex. CcoP subunit is required for transferring electrons from donor cytochrome c via its heme groups to CcoO subunit. From there, electrons are shuttled to the catalytic binuclear center of CcoN subunit where oxygen reduction takes place. The complex also functions as a proton pump. This chain is Cbb3-type cytochrome c oxidase subunit CcoP, found in Rhodobacter capsulatus (strain ATCC BAA-309 / NBRC 16581 / SB1003).